The chain runs to 494 residues: MTTSELPARTSPTPDVRNGIDYKVADLTLAEFGRKEIRLAEHEMPGLMALRREYADVQPLKGARISGSLHMTVQTAVLIETLTALGAQVRWASCNIFSTQDHAAAAVVVGPHGTVEEPKGVSVFAWKGETLEEYWWAAEQMLTWPGEPANMILDDGGDATMLVLRGAQFEKAGVVPPEDADHSAEYKVFLNLLRERFETDRGKWTAIAESVRGVTEETTTGVLRLYQFAAAGELVFPAINVNDSVTKSKFDNKYGTRHSLIDGINRGTDVLIGGKKVLICGYGDVGKGCAESLAGQGARVQVTEIDPINALQALMDGYDVVTVEQAIGEADIVITATGNKDIITLDHMKAMKDQAILGNIGHFDNEIDMAALERSGATRLTIKPQVDLWTFGESGKSIIVLSEGRLLNLGNATGHPSFVMSNSFSNQVIAQIELWTKPEEYDNEVYRLPKHLDEKVARIHVEALGGTLTKLTKDQAEYIGVDVEGPYKPEHYRY.

3 residues coordinate substrate: T72, D155, and E217. 218–220 (TTT) is a binding site for NAD(+). 2 residues coordinate substrate: K247 and D251. Residues N252, 281–286 (GYGDVG), E304, N339, 360–362 (IGH), and N408 contribute to the NAD(+) site.

Belongs to the adenosylhomocysteinase family. NAD(+) serves as cofactor.

It is found in the cytoplasm. It catalyses the reaction S-adenosyl-L-homocysteine + H2O = L-homocysteine + adenosine. Its pathway is amino-acid biosynthesis; L-homocysteine biosynthesis; L-homocysteine from S-adenosyl-L-homocysteine: step 1/1. Functionally, may play a key role in the regulation of the intracellular concentration of adenosylhomocysteine. In Nocardia farcinica (strain IFM 10152), this protein is Adenosylhomocysteinase.